A 311-amino-acid chain; its full sequence is Probable manganese-dependent inorganic pyrophosphatase (311 aa).

Positions 9, 13, 15, 77, 99, and 151 each coordinate Mn(2+).

It belongs to the PPase class C family. Mn(2+) serves as cofactor.

It is found in the cytoplasm. It catalyses the reaction diphosphate + H2O = 2 phosphate + H(+). This is Probable manganese-dependent inorganic pyrophosphatase from Streptococcus agalactiae serotype III (strain NEM316).